We begin with the raw amino-acid sequence, 415 residues long: 6-phospho-beta-glucosidase BglT (415 aa).

An NAD(+)-binding site is contributed by 1 to 64 (MRIAVIGGGS…DRFKVLISDT (64 aa)). Substrate contacts are provided by R87 and N140. Residue C162 coordinates Mn(2+). N163 is a substrate binding site. H192 contacts Mn(2+). The active-site Proton acceptor is Y241. R261 lines the substrate pocket.

This sequence belongs to the glycosyl hydrolase 4 family. In terms of assembly, homodimer or homotetramer. Exists in a homodimer/homotetramer equilibrium state in solution. The cofactor is NAD(+). Mn(2+) is required as a cofactor.

It carries out the reaction 6-phospho-beta-D-glucosyl-(1-&gt;4)-D-glucose + H2O = D-glucose 6-phosphate + D-glucose. Its function is as follows. Hydrolyzes cellobiose 6'-phosphate into glucose 6-phosphate (Glc6P) and glucose. This Thermotoga maritima (strain ATCC 43589 / DSM 3109 / JCM 10099 / NBRC 100826 / MSB8) protein is 6-phospho-beta-glucosidase BglT (bglT).